A 287-amino-acid polypeptide reads, in one-letter code: Mitochondrial dicarboxylate carrier (287 aa).

3 Solcar repeats span residues serine 8–arginine 88, glutamate 101–leucine 188, and aspartate 197–asparagine 280. Helical transmembrane passes span tryptophan 10–leucine 30, glycine 63–tyrosine 82, valine 103–valine 123, glycine 163–tyrosine 182, phenylalanine 203–leucine 223, and glycine 255–glutamate 275.

It belongs to the mitochondrial carrier (TC 2.A.29) family. As to expression, present in high amounts in liver and kidney, and at lower levels in all the other tissues analyzed.

The protein localises to the mitochondrion inner membrane. The catalysed reaction is (S)-malate(in) + phosphate(out) = (S)-malate(out) + phosphate(in). It carries out the reaction malonate(out) + (S)-malate(in) = malonate(in) + (S)-malate(out). The enzyme catalyses (S)-malate(in) + succinate(out) = (S)-malate(out) + succinate(in). It catalyses the reaction (S)-malate(in) + sulfate(out) = (S)-malate(out) + sulfate(in). The catalysed reaction is malonate(out) + phosphate(in) = malonate(in) + phosphate(out). It carries out the reaction succinate(out) + phosphate(in) = succinate(in) + phosphate(out). The enzyme catalyses sulfate(out) + phosphate(in) = sulfate(in) + phosphate(out). It catalyses the reaction malonate(out) + succinate(in) = malonate(in) + succinate(out). Functionally, catalyzes the electroneutral exchange or flux of physiologically important metabolites such as dicarboxylates (malonate, malate, succinate), inorganic sulfur-containing anions, and phosphate, across mitochondrial inner membrane. Plays an important role in gluconeogenesis, fatty acid metabolism, urea synthesis, and sulfur metabolism, particularly in liver, by supplying the substrates for the different metabolic processes. Regulates fatty acid release from adipocytes, and contributes to systemic insulin sensitivity. The chain is Mitochondrial dicarboxylate carrier (SLC25A10) from Homo sapiens (Human).